The following is a 177-amino-acid chain: Large ribosomal subunit protein uL6 (177 aa).

The protein belongs to the universal ribosomal protein uL6 family. In terms of assembly, part of the 50S ribosomal subunit.

Functionally, this protein binds to the 23S rRNA, and is important in its secondary structure. It is located near the subunit interface in the base of the L7/L12 stalk, and near the tRNA binding site of the peptidyltransferase center. The protein is Large ribosomal subunit protein uL6 of Cupriavidus metallidurans (strain ATCC 43123 / DSM 2839 / NBRC 102507 / CH34) (Ralstonia metallidurans).